Reading from the N-terminus, the 316-residue chain is Cuticle collagen 12 (316 aa).

Residues 1–36 form the signal peptide; it reads MTEDPKQIAQETESLRKVAFFGIAVSTIATLTAIIA. Low complexity-rich tracts occupy residues 127–157 and 183–204; these read SGAAGPAGSPGQDGAPGNDGAPGAPGNPGQD and APGQKGPSGAPGAPGQSGGAAL. The disordered stretch occupies residues 127–316; that stretch reads SGAAGPAGSP…CPPPRTAPGY (190 aa). Triple-helical region stretches follow at residues 128–157, 176–202, 206–235, 240–266, and 269–304; these read GAAGPAGSPGQDGAPGNDGAPGAPGNPGQD, GPPGPSGAPGQKGPSGAPGAPGQSGGA, GPPGPAGPPGPAGQPGSNGNAGAPGAPGQV, GTPGPAGPPGSPGPAGAPGQPGQAGSS, and GGPGPQGDAGAPGAPGAPGQAGAPGQDGESGSEGAC. The span at 205-217 shows a compositional bias: pro residues; it reads PGPPGPAGPPGPA. A compositionally biased stretch (low complexity) spans 219–234; the sequence is QPGSNGNAGAPGAPGQ. The span at 241–251 shows a compositional bias: pro residues; sequence TPGPAGPPGSP. Composition is skewed to low complexity over residues 256–266 and 276–295; these read APGQPGQAGSS and DAGAPGAPGAPGQAGAPGQD. The segment covering 307 to 316 has biased composition (pro residues); the sequence is CPPPRTAPGY.

The protein belongs to the cuticular collagen family. As to quaternary structure, collagen polypeptide chains are complexed within the cuticle by disulfide bonds and other types of covalent cross-links.

Its function is as follows. Nematode cuticles are composed largely of collagen-like proteins. The cuticle functions both as an exoskeleton and as a barrier to protect the worm from its environment. The sequence is that of Cuticle collagen 12 (col-12) from Caenorhabditis elegans.